The chain runs to 997 residues: Sorting nexin-19 (997 aa).

In terms of domain architecture, PXA spans 95–273 (ERQLEQEINR…ILVSIFSKYR (179 aa)). Disordered stretches follow at residues 313-333 (SSPA…SPEI) and 413-437 (GALE…APGT). The span at 422 to 435 (GSECMEGAEAEEAP) shows a compositional bias: acidic residues. One can recognise a PX domain in the interval 538-668 (LRITGTITAR…EFLALNTDAR (131 aa)). Arginine 587 and arginine 634 together coordinate a 1,2-diacyl-sn-glycero-3-phospho-(1D-myo-inositol-3-phosphate). Residues 697–728 (FPRSEPQSPTEELSEAENESKPQTEGKKASKS) are disordered. Residues 714 to 724 (NESKPQTEGKK) are compositionally biased toward basic and acidic residues.

This sequence belongs to the sorting nexin family. In terms of assembly, interacts with PTPRN.

The protein resides in the early endosome membrane. It is found in the cytoplasmic vesicle membrane. Plays a role in intracellular vesicle trafficking and exocytosis. May play a role in maintaining insulin-containing dense core vesicles in pancreatic beta-cells and in preventing their degradation. May play a role in insulin secretion. Interacts with membranes containing phosphatidylinositol 3-phosphate (PtdIns(3P)). This chain is Sorting nexin-19, found in Mus musculus (Mouse).